A 1030-amino-acid chain; its full sequence is MKVKEETLKNLGDGVVLRPVDHCSSIWSMKMNMKNFLKKLHISPNQSDEAEGSISTTKSNHHKSIDVSSSSSPRSHHSNSPEIKPFSGLSNWLSSVGHRKIPSPPNSFNAKNRAATVDDTVVVNGSEHVDLGSKDPAVEEENQIQLALELSAREDPEATQIEAIKQFSLGSCAPENSPAELIAYRYWNYNCLGYDDKILDGFYDLYGVLNASSAERIPPLLDLQGTPVSDGVTWEAVLVNRSGDSNLLRLEQMALDIAAKSRSVSSSGFVNSELVRKLAILVGDYMGGPVVHPESMLRAWRSLSYSLKATLGSMVLPLGSLTIGLARHRALLFKVLCDSVGVPCRIVKGQQYTGSEDVAMNFIKADDGREYIVDLMGDPGTLIPADAAGLQIDYDESAYSASPGDNDSIHVASSSNGIESSYEENTEFRTGEHRSSTKSSGERNQSGGGGDLIVHPNISREDVKNQKKVEKAPFQNLSSRPIHSFTHMRSPSWTEGVSSPAAQRMKVKDVSQYMIDAAKENPRLAQKLHDVLLESGVVAPPNLFSEVYPQQLEATVESKNSTEAKKERGKDLETTQEGRHQNGFGPVRFLPPLPRVQSKTNAHDQRDNGKVVSQSDSSHSEASSTEYARTVPAAVAAAAVVASSMVAAAAAKSANSDSSPIELPAAAAATATAAAVVATAAAVSRQLELGSNSDGDDGSGGHEPQGSGDSNHGPNSGGERISDKSIGNESSKSDCDDVSDCEILWEEITVGERIGLGSYGEVYRGDWHGTEVAVKKFLDQDLTGEALEEFRSEVRIMKKLRHPNIVLFMGAVTRPPNLSIVTEFLPRGSLYRLIHRPNNQLDERRRLRMALDAARGMNYLHSCNPMIVHRDLKSPNLLVDKNWVVKVCDFGLSRMKHSTYLSSKSTAGTAEWMAPEVLRNEPADEKCDVYSYGVILWELFTLQQPWGKMNPMQVVGAVGFQHRRLDIPDFVDPAIADLISKCWQTDSKLRPSFAEIMASLKRLQKPVTGSNIPRPVPSSSSLPTEHEQKD.

Polar residues-rich tracts occupy residues 44–58 and 399–419; these read PNQSDEAEGSISTTK and YSASPGDNDSIHVASSSNGIE. 4 disordered regions span residues 44–84, 399–474, 555–625, and 689–736; these read PNQS…PEIK, YSAS…KAPF, TVES…ASST, and LGSN…SDCD. Basic and acidic residues-rich tracts occupy residues 426 to 435, 458 to 471, and 560 to 580; these read TEFRTGEHRS, ISREDVKNQKKVEK, and NSTEAKKERGKDLETTQEGRH. Residues 613 to 625 show a composition bias toward low complexity; that stretch reads SQSDSSHSEASST. Residues 748 to 1003 form the Protein kinase domain; it reads ITVGERIGLG…AEIMASLKRL (256 aa). ATP contacts are provided by residues 754–762 and lysine 775; that span reads IGLGSYGEV. Aspartate 871 serves as the catalytic Proton acceptor. A compositionally biased stretch (polar residues) spans 1007 to 1023; sequence VTGSNIPRPVPSSSSLP. The disordered stretch occupies residues 1007–1030; the sequence is VTGSNIPRPVPSSSSLPTEHEQKD.

It belongs to the protein kinase superfamily. Ser/Thr protein kinase family. Interacts with UGT72E1. As to expression, expressed roots, rosette and cauline leaves, and at lower levels in flowers and siliques.

The protein resides in the nucleus. The enzyme catalyses L-seryl-[protein] + ATP = O-phospho-L-seryl-[protein] + ADP + H(+). It carries out the reaction L-threonyl-[protein] + ATP = O-phospho-L-threonyl-[protein] + ADP + H(+). Its function is as follows. Acts as a negative regulator of salt tolerance. Mediates sugar response during early seedling development. The sequence is that of Probable serine/threonine-protein kinase SIS8 from Arabidopsis thaliana (Mouse-ear cress).